The primary structure comprises 293 residues: Tyrosine recombinase XerD (293 aa).

The 83-residue stretch at 1–83 folds into the Core-binding (CB) domain; sequence MHGLIADFIH…ALRKFYRFLL (83 aa). Residues 104–287 enclose the Tyr recombinase domain; sequence HLPATLSGTE…SNQHLVAVYH (184 aa). Catalysis depends on residues arginine 144, lysine 168, histidine 239, arginine 242, and histidine 265. The O-(3'-phospho-DNA)-tyrosine intermediate role is filled by tyrosine 274.

This sequence belongs to the 'phage' integrase family. XerD subfamily. In terms of assembly, forms a cyclic heterotetrameric complex composed of two molecules of XerC and two molecules of XerD.

It localises to the cytoplasm. Site-specific tyrosine recombinase, which acts by catalyzing the cutting and rejoining of the recombining DNA molecules. The XerC-XerD complex is essential to convert dimers of the bacterial chromosome into monomers to permit their segregation at cell division. It also contributes to the segregational stability of plasmids. The protein is Tyrosine recombinase XerD of Lacticaseibacillus casei (Lactobacillus casei).